The primary structure comprises 282 residues: tRNA (guanine-N(1)-)-methyltransferase (282 aa).

Residue 145–150 (IGDYVL) participates in S-adenosyl-L-methionine binding.

Belongs to the RNA methyltransferase TrmD family. In terms of assembly, homodimer.

It localises to the cytoplasm. It carries out the reaction guanosine(37) in tRNA + S-adenosyl-L-methionine = N(1)-methylguanosine(37) in tRNA + S-adenosyl-L-homocysteine + H(+). Functionally, specifically methylates guanosine-37 in various tRNAs. The chain is tRNA (guanine-N(1)-)-methyltransferase from Streptomyces avermitilis (strain ATCC 31267 / DSM 46492 / JCM 5070 / NBRC 14893 / NCIMB 12804 / NRRL 8165 / MA-4680).